The sequence spans 507 residues: Phosphoenolpyruvate carboxylase (507 aa).

Residues 1–25 (MHKIDRKIPNIMGTQHPDNAGVPFF) are disordered.

The protein belongs to the PEPCase type 2 family. As to quaternary structure, homotetramer. Mg(2+) serves as cofactor.

It carries out the reaction oxaloacetate + phosphate = phosphoenolpyruvate + hydrogencarbonate. Catalyzes the irreversible beta-carboxylation of phosphoenolpyruvate (PEP) to form oxaloacetate (OAA), a four-carbon dicarboxylic acid source for the tricarboxylic acid cycle. The polypeptide is Phosphoenolpyruvate carboxylase (Oenococcus oeni (strain ATCC BAA-331 / PSU-1)).